The sequence spans 877 residues: Leucine--tRNA ligase (877 aa).

The 'HIGH' region signature appears at 50-60 (PYPSGKLHMGH). The short motif at 634–638 (KMSKS) is the 'KMSKS' region element. Residue Lys-637 coordinates ATP.

Belongs to the class-I aminoacyl-tRNA synthetase family.

It localises to the cytoplasm. The enzyme catalyses tRNA(Leu) + L-leucine + ATP = L-leucyl-tRNA(Leu) + AMP + diphosphate. This is Leucine--tRNA ligase from Hydrogenovibrio crunogenus (strain DSM 25203 / XCL-2) (Thiomicrospira crunogena).